We begin with the raw amino-acid sequence, 231 residues long: Large ribosomal subunit protein uL1 (231 aa).

It belongs to the universal ribosomal protein uL1 family. As to quaternary structure, part of the 50S ribosomal subunit.

In terms of biological role, binds directly to 23S rRNA. The L1 stalk is quite mobile in the ribosome, and is involved in E site tRNA release. Functionally, protein L1 is also a translational repressor protein, it controls the translation of the L11 operon by binding to its mRNA. The protein is Large ribosomal subunit protein uL1 of Hydrogenovibrio crunogenus (strain DSM 25203 / XCL-2) (Thiomicrospira crunogena).